The primary structure comprises 184 residues: Muscle-specific protein 20 (184 aa).

Positions 17 to 122 (PEMDKEAQEW…NTIFALGRAT (106 aa)) constitute a Calponin-homology (CH) domain. The Calponin-like repeat unit spans residues 157–181 (VGLQAGSNKGATQAGQNLGAGRKIL).

This sequence belongs to the calponin family. Found in synchronous muscle; not found in asynchronous indirect flight muscle.

In Drosophila melanogaster (Fruit fly), this protein is Muscle-specific protein 20 (Mp20).